The chain runs to 1010 residues: Eukaryotic translation initiation factor 4E transporter (1010 aa).

The short motif at Tyr10–Leu16 is the YXXXXLphi motif element. 5 disordered regions span residues Gly154–Ser182, Pro196–Glu277, Tyr289–Gly320, Asn354–Ser391, and Gln921–Ser960. Residues Cys201–Ser211 are compositionally biased toward polar residues. Residues Asp227–Thr247 are compositionally biased toward basic and acidic residues. Residues Ser248 to Gln263 are compositionally biased toward polar residues. Basic and acidic residues-rich tracts occupy residues Asn354–Asn364 and Lys372–Ser384. The segment covering Ser934–Tyr953 has biased composition (polar residues).

The protein belongs to the 4E-T/EIF4E-T family. Interacts (via YXXXXLphi motif) with eIF4E1. Interacts with DDX6/me31B. Expressed in all larval and adult organs and tissues, with highest levels in the ovary.

It localises to the cytoplasm. The protein resides in the P-body. It is found in the nucleus. Its function is as follows. eIF4E1-binding protein that regulates translation and stability of mRNAs in processing bodies (P-bodies). Probably plays a role in P-bodies to coordinate the storage of translationally inactive mRNAs in the cytoplasm and prevent their degradation. Acts as a binding platform for multiple RNA-binding proteins. Required for the formation of P-bodies. The polypeptide is Eukaryotic translation initiation factor 4E transporter (Drosophila melanogaster (Fruit fly)).